The following is a 417-amino-acid chain: Probable tubulin polyglutamylase ttll-9 (417 aa).

The region spanning 23-372 (QRKKKILFKC…EKKLIGNENE (350 aa)) is the TTL domain. Residues 188 to 191 (QCYV), lysine 201, and aspartate 203 contribute to the ATP site.

Belongs to the tubulin--tyrosine ligase family. As to expression, expressed in head sensory neurons.

In terms of biological role, polyglutamylase that forms polyglutamate side chains on tubulin. Acts when complexed with other proteins. Appears to be dispensable for polar spindle formation in dividing embryonic cells, for cilia-dependent osmotic avoidance and for male mating behavior. Probably by regulating microtubule stability via the glutamylation of tubulin, regulates PLM axon developmental growth. The protein is Probable tubulin polyglutamylase ttll-9 of Caenorhabditis elegans.